The primary structure comprises 120 residues: Aspartate 1-decarboxylase (120 aa).

The Schiff-base intermediate with substrate; via pyruvic acid role is filled by S25. A Pyruvic acid (Ser) modification is found at S25. Residue T57 coordinates substrate. Y58 acts as the Proton donor in catalysis. 72–74 (GAA) contributes to the substrate binding site.

The protein belongs to the PanD family. As to quaternary structure, heterooctamer of four alpha and four beta subunits. The cofactor is pyruvate. Is synthesized initially as an inactive proenzyme, which is activated by self-cleavage at a specific serine bond to produce a beta-subunit with a hydroxyl group at its C-terminus and an alpha-subunit with a pyruvoyl group at its N-terminus.

Its subcellular location is the cytoplasm. The enzyme catalyses L-aspartate + H(+) = beta-alanine + CO2. The protein operates within cofactor biosynthesis; (R)-pantothenate biosynthesis; beta-alanine from L-aspartate: step 1/1. Functionally, catalyzes the pyruvoyl-dependent decarboxylation of aspartate to produce beta-alanine. This Helicobacter hepaticus (strain ATCC 51449 / 3B1) protein is Aspartate 1-decarboxylase.